Reading from the N-terminus, the 403-residue chain is Methylthioribose-1-phosphate isomerase (403 aa).

Residue D277 is the Proton donor of the active site.

It belongs to the eIF-2B alpha/beta/delta subunits family. MtnA subfamily.

Its subcellular location is the cytoplasm. It localises to the nucleus. The enzyme catalyses 5-(methylsulfanyl)-alpha-D-ribose 1-phosphate = 5-(methylsulfanyl)-D-ribulose 1-phosphate. Its pathway is amino-acid biosynthesis; L-methionine biosynthesis via salvage pathway; L-methionine from S-methyl-5-thio-alpha-D-ribose 1-phosphate: step 1/6. Catalyzes the interconversion of methylthioribose-1-phosphate (MTR-1-P) into methylthioribulose-1-phosphate (MTRu-1-P). The polypeptide is Methylthioribose-1-phosphate isomerase (Lodderomyces elongisporus (strain ATCC 11503 / CBS 2605 / JCM 1781 / NBRC 1676 / NRRL YB-4239) (Yeast)).